We begin with the raw amino-acid sequence, 474 residues long: Cysteine--tRNA ligase (474 aa).

Cys34 contacts Zn(2+). The 'HIGH' region signature appears at 36 to 46; sequence PTVYDYAHIGN. The Zn(2+) site is built by Cys219, His244, and Glu248. Residues 276 to 280 carry the 'KMSKS' region motif; the sequence is KMSKS. Lys279 lines the ATP pocket.

It belongs to the class-I aminoacyl-tRNA synthetase family. Monomer. The cofactor is Zn(2+).

Its subcellular location is the cytoplasm. It carries out the reaction tRNA(Cys) + L-cysteine + ATP = L-cysteinyl-tRNA(Cys) + AMP + diphosphate. The sequence is that of Cysteine--tRNA ligase (cysS) from Chlamydia pneumoniae (Chlamydophila pneumoniae).